The sequence spans 295 residues: Probable ketoamine kinase slr1563 (295 aa).

99 to 101 lines the ATP pocket; the sequence is EWL. Catalysis depends on D201, which acts as the Proton acceptor.

The protein belongs to the fructosamine kinase family.

Ketoamine kinase that phosphorylates ketoamines on the third carbon of the sugar moiety to generate ketoamine 3-phosphate. This Synechocystis sp. (strain ATCC 27184 / PCC 6803 / Kazusa) protein is Probable ketoamine kinase slr1563.